A 113-amino-acid chain; its full sequence is UPF0122 protein LAF_1235 (113 aa).

It belongs to the UPF0122 family.

Might take part in the signal recognition particle (SRP) pathway. This is inferred from the conservation of its genetic proximity to ftsY/ffh. May be a regulatory protein. This is UPF0122 protein LAF_1235 from Limosilactobacillus fermentum (strain NBRC 3956 / LMG 18251) (Lactobacillus fermentum).